The chain runs to 392 residues: Alanine--glyoxylate aminotransferase (392 aa).

Residue threonine 9 is modified to Phosphothreonine. Lysine 209 is subject to N6-(pyridoxal phosphate)lysine. The residue at position 225 (lysine 225) is an N6-acetyllysine; alternate. Lysine 225 carries the post-translational modification N6-succinyllysine; alternate. N6-acetyllysine is present on residues lysine 234 and lysine 312. A substrate-binding site is contributed by arginine 360.

The protein belongs to the class-V pyridoxal-phosphate-dependent aminotransferase family. Homodimer. Pyridoxal 5'-phosphate is required as a cofactor. As to expression, liver.

It localises to the peroxisome. The enzyme catalyses L-serine + pyruvate = 3-hydroxypyruvate + L-alanine. It carries out the reaction glyoxylate + L-alanine = glycine + pyruvate. With respect to regulation, alanine--glyoxylate aminotransferase activity is inhibited by 1 mM (aminooxy)acetic acid by 97.5%. In terms of biological role, peroxisomal aminotransferase that catalyzes the transamination of glyoxylate to glycine and contributes to the glyoxylate detoxification. Also catalyzes the transamination between L-serine and pyruvate and contributes to gluconeogenesis from the L-serine metabolism. The polypeptide is Alanine--glyoxylate aminotransferase (Homo sapiens (Human)).